The sequence spans 113 residues: Ig kappa chain V-II region MOPC 511 (113 aa).

Residues 1 to 23 (DIVITQDELSKPVTSGESVSISC) are framework-1. A disulfide bridge links Cys-23 with Cys-93. The complementarity-determining-1 stretch occupies residues 24–39 (RSSKSLLYKDGKTYLN). Residues 40–54 (WFLQGPQQSPRLLIY) are framework-2. Positions 55–61 (LMSTRAS) are complementarity-determining-2. The interval 62–93 (GVSDRFSGSGSGTDFTLEISRVKAEDVGVYYC) is framework-3. Residues 94–102 (QQLVEYPLT) are complementarity-determining-3. The segment at 103–112 (FGAGTKLELK) is framework-4.

This chain is Ig kappa chain V-II region MOPC 511, found in Mus musculus (Mouse).